The following is a 73-amino-acid chain: MQKLLLILTILLALILITLVISLPRENQQFFSETRSTIGKSGYWETNFFKKIILLIVSILLFLTLIFYMIQTA.

Residues 1–30 (MQKLLLILTILLALILITLVISLPRENQQF) form the signal peptide. A helical transmembrane segment spans residues 52–72 (IILLIVSILLFLTLIFYMIQT).

In terms of assembly, part of the accessory SecA2/SecY2 protein translocation apparatus required to export cell wall protein GspB.

Its subcellular location is the cell membrane. Functionally, part of the accessory SecA2/SecY2 system specifically required to export GspB, a serine-rich repeat cell wall protein encoded upstream in the same operon. The sequence is that of Accessory secretory protein Asp5 (asp5) from Streptococcus gordonii.